The primary structure comprises 258 residues: Acetylglutamate kinase (258 aa).

Substrate is bound by residues Gly44–Gly45, Arg66, and Asn158. ATP is bound by residues Asp181 to Leu186 and Ile209 to Thr211.

This sequence belongs to the acetylglutamate kinase family. ArgB subfamily. Homodimer.

The protein localises to the cytoplasm. The catalysed reaction is N-acetyl-L-glutamate + ATP = N-acetyl-L-glutamyl 5-phosphate + ADP. It participates in amino-acid biosynthesis; L-arginine biosynthesis; N(2)-acetyl-L-ornithine from L-glutamate: step 2/4. Catalyzes the ATP-dependent phosphorylation of N-acetyl-L-glutamate. The sequence is that of Acetylglutamate kinase from Shigella dysenteriae serotype 1 (strain Sd197).